We begin with the raw amino-acid sequence, 451 residues long: Phosphoglucosamine mutase (451 aa).

Ser-102 serves as the catalytic Phosphoserine intermediate. Residues Ser-102, Asp-242, Asp-244, and Asp-246 each coordinate Mg(2+). Phosphoserine is present on Ser-102.

This sequence belongs to the phosphohexose mutase family. Mg(2+) serves as cofactor. Post-translationally, activated by phosphorylation.

It carries out the reaction alpha-D-glucosamine 1-phosphate = D-glucosamine 6-phosphate. Its function is as follows. Catalyzes the conversion of glucosamine-6-phosphate to glucosamine-1-phosphate. This chain is Phosphoglucosamine mutase, found in Staphylococcus aureus (strain bovine RF122 / ET3-1).